A 369-amino-acid chain; its full sequence is Superinfection exclusion protein (369 aa).

Residues 1–15 (MIALLILSLTCSAST) form the signal peptide.

It belongs to the serpin family. Orthopoxvirus OPG040 subfamily. In terms of assembly, interacts with A56 protein.

Its subcellular location is the virion membrane. The protein resides in the host cell membrane. In terms of biological role, prevents cell to cell fusion via its interaction with A56 protein. The A56-K2 complex associates with components of the entry fusion complex (EFC) presumably to avoid superinfection and syncytium formation. The sequence is that of Superinfection exclusion protein (OPG040) from Vaccinia virus (strain Ankara) (VACV).